A 141-amino-acid polypeptide reads, in one-letter code: MSKALIKFIRLSPTKARLIAREVQGMNAELAMASLKFMPNKGAKYIANAISSAVANGGFEANEVIVKSCRVDVAAVLKRFRPRARGSASRIRKPTSHILVEVVKAEVKAEEKKTVAKKTTTTKAPAKKTTSTKKATAKKES.

Positions E110–S141 are disordered. The span at K117–K134 shows a compositional bias: low complexity.

It belongs to the universal ribosomal protein uL22 family. As to quaternary structure, part of the 50S ribosomal subunit.

Its function is as follows. This protein binds specifically to 23S rRNA; its binding is stimulated by other ribosomal proteins, e.g. L4, L17, and L20. It is important during the early stages of 50S assembly. It makes multiple contacts with different domains of the 23S rRNA in the assembled 50S subunit and ribosome. In terms of biological role, the globular domain of the protein is located near the polypeptide exit tunnel on the outside of the subunit, while an extended beta-hairpin is found that lines the wall of the exit tunnel in the center of the 70S ribosome. This Campylobacter jejuni subsp. doylei (strain ATCC BAA-1458 / RM4099 / 269.97) protein is Large ribosomal subunit protein uL22.